Here is a 248-residue protein sequence, read N- to C-terminus: Ubiquinone/menaquinone biosynthesis C-methyltransferase UbiE (248 aa).

Residues Ser-68 and Asp-92 each contribute to the S-adenosyl-L-methionine site.

Belongs to the class I-like SAM-binding methyltransferase superfamily. MenG/UbiE family.

It carries out the reaction a 2-demethylmenaquinol + S-adenosyl-L-methionine = a menaquinol + S-adenosyl-L-homocysteine + H(+). The catalysed reaction is a 2-methoxy-6-(all-trans-polyprenyl)benzene-1,4-diol + S-adenosyl-L-methionine = a 5-methoxy-2-methyl-3-(all-trans-polyprenyl)benzene-1,4-diol + S-adenosyl-L-homocysteine + H(+). It functions in the pathway quinol/quinone metabolism; menaquinone biosynthesis; menaquinol from 1,4-dihydroxy-2-naphthoate: step 2/2. The protein operates within cofactor biosynthesis; ubiquinone biosynthesis. In terms of biological role, methyltransferase required for the conversion of demethylmenaquinol (DMKH2) to menaquinol (MKH2) and the conversion of 2-polyprenyl-6-methoxy-1,4-benzoquinol (DDMQH2) to 2-polyprenyl-3-methyl-6-methoxy-1,4-benzoquinol (DMQH2). The protein is Ubiquinone/menaquinone biosynthesis C-methyltransferase UbiE of Rickettsia rickettsii (strain Iowa).